A 197-amino-acid chain; its full sequence is MEDHPVREEEDGEEDEGALAKSPLQLTTDDVYDISYVVGRELMALGSDPRVTRLQFKIVRVMEMLETLVNEGSLAVEELRMERDNLKQEVEGLRKAGVSGAQVNLGPDKMVVDLTDPNRPRFTLQELREVLQERNKLKSQLLLVQEELQCYRSGLLPPRETPGGRREKDAVVAMGNGEKEERTIMKKLFSFRSGKHT.

The segment at 1 to 24 (MEDHPVREEEDGEEDEGALAKSPL) is disordered. Residues 8-17 (EEEDGEEDEG) are compositionally biased toward acidic residues. Positions 14 to 96 (EDEGALAKSP…KQEVEGLRKA (83 aa)) constitute an RH1 domain. Residues 69-153 (VNEGSLAVEE…VQEELQCYRS (85 aa)) adopt a coiled-coil conformation. One can recognise an RH2 domain in the interval 119-184 (RPRFTLQELR…GNGEKEERTI (66 aa)).

This sequence belongs to the RILPL family. Homodimer. Interacts with RAC1. Interacts (via N-terminus) with MYO5A, the interaction is required for its role in dendrite formation. Interacts with RAB8A; interaction is dependent on the phosphorylation of RAB8A on 'Thr-72'. Interacts with RAB10 and RAB12; interaction is dependent on the phosphorylation of 'Thr-73' on RAB10 and 'Ser-105' on RAB12.

The protein localises to the cytoplasm. The protein resides in the cytosol. It is found in the cytoskeleton. Its subcellular location is the microtubule organizing center. It localises to the centrosome. The protein localises to the cell projection. The protein resides in the cilium. Its function is as follows. Involved in cell shape and neuronal morphogenesis, positively regulating the establishment and maintenance of dendritic spines. Plays a role in cellular protein transport, including protein transport away from primary cilia. May function via activation of RAC1 and PAK1. This chain is RILP-like protein 2 (Rilpl2), found in Mus musculus (Mouse).